Consider the following 378-residue polypeptide: MTTATGKVNLLGLTQPQLEQFFESIGEKRFRAGQVMKWIHHFGVDDFDAMTNVGKALREKLKAFAEIRGPEIVSQDISADGTRKWVVRVASGSCVETVYIPQGGRGTLCVSSQAGCALDCSFCSTGKQGFNSDLSAAEVIGQVWIANKSFGTVPAKIDRAITNVVMMGMGEPLLNFDNVVAAMNIMMDDLGYGISKRKVTLSTSGVVPMIDKLGEVIDVSLALSLHAPNDELRNRLVPINKKYPLTMLLDACRRYISRLGEKRVLTVEYTLLKDVNDQPEHAEQMIALLKDTPCKINLIPFNPFPHSGYERPSNNAIRRFQDLLHKGGFNVTVRTTRGDDIDAACGQLVGQVMDRTRRSERYIAVRQLAESESAANRN.

Glu96 (proton acceptor) is an active-site residue. Residues 102-342 form the Radical SAM core domain; it reads QGGRGTLCVS…VRTTRGDDID (241 aa). An intrachain disulfide couples Cys109 to Cys345. 3 residues coordinate [4Fe-4S] cluster: Cys116, Cys120, and Cys123. S-adenosyl-L-methionine contacts are provided by residues 170 to 171, Ser202, 224 to 226, and Asn302; these read GE and SLH. The S-methylcysteine intermediate role is filled by Cys345.

Belongs to the radical SAM superfamily. RlmN family. Requires [4Fe-4S] cluster as cofactor.

Its subcellular location is the cytoplasm. It catalyses the reaction adenosine(2503) in 23S rRNA + 2 reduced [2Fe-2S]-[ferredoxin] + 2 S-adenosyl-L-methionine = 2-methyladenosine(2503) in 23S rRNA + 5'-deoxyadenosine + L-methionine + 2 oxidized [2Fe-2S]-[ferredoxin] + S-adenosyl-L-homocysteine. It carries out the reaction adenosine(37) in tRNA + 2 reduced [2Fe-2S]-[ferredoxin] + 2 S-adenosyl-L-methionine = 2-methyladenosine(37) in tRNA + 5'-deoxyadenosine + L-methionine + 2 oxidized [2Fe-2S]-[ferredoxin] + S-adenosyl-L-homocysteine. Functionally, specifically methylates position 2 of adenine 2503 in 23S rRNA and position 2 of adenine 37 in tRNAs. m2A2503 modification seems to play a crucial role in the proofreading step occurring at the peptidyl transferase center and thus would serve to optimize ribosomal fidelity. In Pseudomonas paraeruginosa (strain DSM 24068 / PA7) (Pseudomonas aeruginosa (strain PA7)), this protein is Dual-specificity RNA methyltransferase RlmN.